We begin with the raw amino-acid sequence, 236 residues long: MSKNSKAYREAAAKIDAGREYTPLQAAELVKETSSKNFDASVDVAIRLGVDPRKADQLVRGTVSLPNGTGKTVRVAVFAAGEKATEAEAAGADFVGTDELVERIQGGWTDFDVAIATPDQMAKIGRIARVLGPRGLMPNPKTGTVTNDVAKAIEEVKGGKISFRVDKASNLHAAIGKASFDAKALAENYGALIDELLRIKPSSSKGIYLKKITMSSTTGPGVAVDTHITKNYTAEA.

This sequence belongs to the universal ribosomal protein uL1 family. In terms of assembly, part of the 50S ribosomal subunit.

In terms of biological role, binds directly to 23S rRNA. The L1 stalk is quite mobile in the ribosome, and is involved in E site tRNA release. Its function is as follows. Protein L1 is also a translational repressor protein, it controls the translation of the L11 operon by binding to its mRNA. This chain is Large ribosomal subunit protein uL1, found in Corynebacterium efficiens (strain DSM 44549 / YS-314 / AJ 12310 / JCM 11189 / NBRC 100395).